Here is a 227-residue protein sequence, read N- to C-terminus: MAYPFQLGLQDATSPIMEELTNFHDHTLMIVFLISTLVLYIISLMLTTKLTHTSTMDAQEVETIWTILPAVILILIALPSLRILYMMDEINNPALTVKTMGHQWYWSYEYTDYEDLCFDSYMIPTNDLKPGELRLLEVDNRVVLPMELPIRMLISSEDVLHSWAVPSLGLKTDAIPGRLNQATVSSNRPGLFYGQCSEICGSNHSFMPIVLEMVPLKYFEDWSASMI.

Topologically, residues 1 to 14 (MAYPFQLGLQDATS) are mitochondrial intermembrane. The helical transmembrane segment at 15 to 45 (PIMEELTNFHDHTLMIVFLISTLVLYIISLM) threads the bilayer. Residues 46 to 59 (LTTKLTHTSTMDAQ) lie on the Mitochondrial matrix side of the membrane. A helical transmembrane segment spans residues 60–87 (EVETIWTILPAVILILIALPSLRILYMM). The Mitochondrial intermembrane segment spans residues 88–227 (DEINNPALTV…YFEDWSASMI (140 aa)). H161, C196, E198, C200, H204, and M207 together coordinate Cu cation. E198 contributes to the Mg(2+) binding site. Y218 carries the post-translational modification Phosphotyrosine.

Belongs to the cytochrome c oxidase subunit 2 family. In terms of assembly, component of the cytochrome c oxidase (complex IV, CIV), a multisubunit enzyme composed of 14 subunits. The complex is composed of a catalytic core of 3 subunits MT-CO1, MT-CO2 and MT-CO3, encoded in the mitochondrial DNA, and 11 supernumerary subunits COX4I, COX5A, COX5B, COX6A, COX6B, COX6C, COX7A, COX7B, COX7C, COX8 and NDUFA4, which are encoded in the nuclear genome. The complex exists as a monomer or a dimer and forms supercomplexes (SCs) in the inner mitochondrial membrane with NADH-ubiquinone oxidoreductase (complex I, CI) and ubiquinol-cytochrome c oxidoreductase (cytochrome b-c1 complex, complex III, CIII), resulting in different assemblies (supercomplex SCI(1)III(2)IV(1) and megacomplex MCI(2)III(2)IV(2)). Found in a complex with TMEM177, COA6, COX18, COX20, SCO1 and SCO2. Interacts with TMEM177 in a COX20-dependent manner. Interacts with COX20. Interacts with COX16. The cofactor is Cu cation.

The protein localises to the mitochondrion inner membrane. The enzyme catalyses 4 Fe(II)-[cytochrome c] + O2 + 8 H(+)(in) = 4 Fe(III)-[cytochrome c] + 2 H2O + 4 H(+)(out). Component of the cytochrome c oxidase, the last enzyme in the mitochondrial electron transport chain which drives oxidative phosphorylation. The respiratory chain contains 3 multisubunit complexes succinate dehydrogenase (complex II, CII), ubiquinol-cytochrome c oxidoreductase (cytochrome b-c1 complex, complex III, CIII) and cytochrome c oxidase (complex IV, CIV), that cooperate to transfer electrons derived from NADH and succinate to molecular oxygen, creating an electrochemical gradient over the inner membrane that drives transmembrane transport and the ATP synthase. Cytochrome c oxidase is the component of the respiratory chain that catalyzes the reduction of oxygen to water. Electrons originating from reduced cytochrome c in the intermembrane space (IMS) are transferred via the dinuclear copper A center (CU(A)) of subunit 2 and heme A of subunit 1 to the active site in subunit 1, a binuclear center (BNC) formed by heme A3 and copper B (CU(B)). The BNC reduces molecular oxygen to 2 water molecules using 4 electrons from cytochrome c in the IMS and 4 protons from the mitochondrial matrix. This chain is Cytochrome c oxidase subunit 2 (MT-CO2), found in Hybomys univittatus (Peter's striped mouse).